A 285-amino-acid chain; its full sequence is Bifunctional protein FolD (285 aa).

Residues 165–167, Ser-190, and Ile-231 each bind NADP(+); that span reads GRS.

It belongs to the tetrahydrofolate dehydrogenase/cyclohydrolase family. In terms of assembly, homodimer.

It catalyses the reaction (6R)-5,10-methylene-5,6,7,8-tetrahydrofolate + NADP(+) = (6R)-5,10-methenyltetrahydrofolate + NADPH. The enzyme catalyses (6R)-5,10-methenyltetrahydrofolate + H2O = (6R)-10-formyltetrahydrofolate + H(+). It participates in one-carbon metabolism; tetrahydrofolate interconversion. Catalyzes the oxidation of 5,10-methylenetetrahydrofolate to 5,10-methenyltetrahydrofolate and then the hydrolysis of 5,10-methenyltetrahydrofolate to 10-formyltetrahydrofolate. In Acetivibrio thermocellus (strain ATCC 27405 / DSM 1237 / JCM 9322 / NBRC 103400 / NCIMB 10682 / NRRL B-4536 / VPI 7372) (Clostridium thermocellum), this protein is Bifunctional protein FolD.